The primary structure comprises 780 residues: Endonuclease MutS2 (780 aa).

334–341 (GPNAGGKT) contacts ATP. One can recognise a Smr domain in the interval 706-780 (IDIRGMRSVD…GGSGKTIVEI (75 aa)).

It belongs to the DNA mismatch repair MutS family. MutS2 subfamily. As to quaternary structure, homodimer. Binds to stalled ribosomes, contacting rRNA.

In terms of biological role, endonuclease that is involved in the suppression of homologous recombination and thus may have a key role in the control of bacterial genetic diversity. Its function is as follows. Acts as a ribosome collision sensor, splitting the ribosome into its 2 subunits. Detects stalled/collided 70S ribosomes which it binds and splits by an ATP-hydrolysis driven conformational change. Acts upstream of the ribosome quality control system (RQC), a ribosome-associated complex that mediates the extraction of incompletely synthesized nascent chains from stalled ribosomes and their subsequent degradation. Probably generates substrates for RQC. The sequence is that of Endonuclease MutS2 from Borreliella burgdorferi (strain ATCC 35210 / DSM 4680 / CIP 102532 / B31) (Borrelia burgdorferi).